The chain runs to 319 residues: Adenosine receptor A3 (319 aa).

Over 1–15 (MEADNTTETDWLNIT) the chain is Extracellular. 2 N-linked (GlcNAc...) asparagine glycosylation sites follow: asparagine 5 and asparagine 13. Residues 16–38 (YITMEAAIGLCAVVGNMLVIWVV) form a helical membrane-spanning segment. Residues 39–49 (KLNPTLRTTTV) lie on the Cytoplasmic side of the membrane. The chain crosses the membrane as a helical span at residues 50–73 (YFIVSLALADIAVGVLVIPLAIAV). The Extracellular segment spans residues 74–85 (SLQVKMHFYACL). A disulfide bridge connects residues cysteine 84 and cysteine 167. A helical transmembrane segment spans residues 86-107 (FMSCVLLIFTHASIMSLLAIAV). Over 108–127 (HRYLRVKLTVRYRTVTTQRR) the chain is Cytoplasmic. Residues 128–149 (IWLFLGLCWLVSFLVGLTPMFG) traverse the membrane as a helical segment. Residues 150-178 (WNRKATLASSQNSSTLLCHFRSVVSLDYM) lie on the Extracellular side of the membrane. Residue asparagine 161 is glycosylated (N-linked (GlcNAc...) asparagine). A helical transmembrane segment spans residues 179 to 199 (VFFSFITWILVPLVVMCIIYL). Residues 200–232 (DIFYIIRNKLSQNLTGFRETRAFYGREFKTAKS) are Cytoplasmic-facing. The chain crosses the membrane as a helical span at residues 233–256 (LFLVLFLFALCWLPLSIINFVSYF). The Extracellular portion of the chain corresponds to 257–262 (DVKIPD). A helical transmembrane segment spans residues 263–285 (VAMCLGILLSHANSMMNPIVYAC). The Cytoplasmic segment spans residues 286–319 (KIKKFKETYFLILRAVRLCQTSDSLDSNMEQTTE). The S-palmitoyl cysteine moiety is linked to residue cysteine 304.

The protein belongs to the G-protein coupled receptor 1 family. Phosphorylation on Thr-317 and Thr-318 may be crucial for rapid desensitization. Phosphorylation on Thr-317 may be necessary for phosphorylation on Thr-318 to occur.

It localises to the cell membrane. In terms of biological role, receptor for adenosine. The activity of this receptor is mediated by G proteins which inhibits adenylyl cyclase. The chain is Adenosine receptor A3 (Adora3) from Mus musculus (Mouse).